A 113-amino-acid polypeptide reads, in one-letter code: Large ribosomal subunit protein bL19 (113 aa).

It belongs to the bacterial ribosomal protein bL19 family.

In terms of biological role, this protein is located at the 30S-50S ribosomal subunit interface and may play a role in the structure and function of the aminoacyl-tRNA binding site. This is Large ribosomal subunit protein bL19 from Mycolicibacterium smegmatis (strain ATCC 700084 / mc(2)155) (Mycobacterium smegmatis).